Consider the following 441-residue polypeptide: Apolipoprotein N-acyltransferase (441 aa).

Helical transmembrane passes span 23-43 (IIFKIIKVFFIAILLSNSIYL), 45-65 (FFENIFTQTISPFLAIWGLVL), 75-95 (YFWIGFFVGILWFWWIGLSSI), 97-117 (FNLNYLVPIIPIIIGFIYGLL), 133-153 (GIFCISFIHPLGFDWFNWGIF), 156-176 (YGFFDPSYRGIICIFLIAYFI), and 178-198 (EGYISRYYKIAIVLILFFSGF). A CN hydrolase domain is found at 215–441 (INTNISQDQK…LSKEIFNDKK (227 aa)). The active-site Proton acceptor is the glutamate 256. The active site involves lysine 310. Cysteine 359 functions as the Nucleophile in the catalytic mechanism.

Belongs to the CN hydrolase family. Apolipoprotein N-acyltransferase subfamily.

Its subcellular location is the cell inner membrane. The enzyme catalyses N-terminal S-1,2-diacyl-sn-glyceryl-L-cysteinyl-[lipoprotein] + a glycerophospholipid = N-acyl-S-1,2-diacyl-sn-glyceryl-L-cysteinyl-[lipoprotein] + a 2-acyl-sn-glycero-3-phospholipid + H(+). It participates in protein modification; lipoprotein biosynthesis (N-acyl transfer). Its function is as follows. Catalyzes the phospholipid dependent N-acylation of the N-terminal cysteine of apolipoprotein, the last step in lipoprotein maturation. In Campylobacter jejuni subsp. jejuni serotype O:2 (strain ATCC 700819 / NCTC 11168), this protein is Apolipoprotein N-acyltransferase.